The following is a 415-amino-acid chain: Corticotropin-releasing factor receptor 1 (415 aa).

A signal peptide spans 1–24 (MLLAKTPCLLLVQVIAAGISFALT). Residues 25–111 (SLQDQCETLQ…CQEILKQEKK (87 aa)) are Extracellular-facing. 3 disulfides stabilise this stretch: cysteine 30–cysteine 54, cysteine 44–cysteine 87, and cysteine 68–cysteine 102. Asparagine 38, asparagine 45, asparagine 78, and asparagine 90 each carry an N-linked (GlcNAc...) asparagine glycan. Residues 112 to 142 (TKVHYHIAIVINFLGHSISLCALLVAFILFL) traverse the membrane as a helical segment. Topologically, residues 143-149 (RLRSIRC) are cytoplasmic. Residues 150–174 (LRNIIHWNLITAFILRNVTWFVMQL) form a helical membrane-spanning segment. Over 175–189 (TLSHEAHDSNVVWCR) the chain is Extracellular. Cysteine 188 and cysteine 258 are disulfide-bonded. The helical transmembrane segment at 190–218 (LVTIAHNYFYVTNFFWMFGEGCYLHTAIV) threads the bilayer. Over 219-225 (LTYSTDK) the chain is Cytoplasmic. A helical membrane pass occupies residues 226 to 253 (LRKWMFICIGWCIPFPIIVAWAIGKLYY). At 254-269 (DNEKCWFGKKAGVYTD) the chain is on the extracellular side. The chain crosses the membrane as a helical span at residues 270–295 (FIYQGPVILVLLINFIFLFNIVRILM). The Cytoplasmic segment spans residues 296–306 (TKLRASTTSET). Residues 307–331 (IQYRKAVKATLVLLPLLGITYMLFF) form a helical membrane-spanning segment. The Extracellular segment spans residues 332–338 (VTPGEDE). The chain crosses the membrane as a helical span at residues 339 to 368 (ISRIVFIYFNSFLQSFQGFFVSVFYCFLNS). At 369–415 (EVRSAVRKRWHRWQDKHSIRARVARAMSIPTSPTRISFHSIKQSSAI) the chain is on the cytoplasmic side.

Belongs to the G-protein coupled receptor 2 family. As to quaternary structure, interacts (via N-terminal extracellular domain) with CRF and UCN.

The protein localises to the cell membrane. G-protein coupled receptor for CRH (corticotropin-releasing factor) and UCN (urocortin). Has high affinity for CRH and UCN. Ligand binding causes a conformation change that triggers signaling via guanine nucleotide-binding proteins (G proteins) and down-stream effectors, such as adenylate cyclase. Promotes the activation of adenylate cyclase, leading to increased intracellular cAMP levels. This is Corticotropin-releasing factor receptor 1 (crhr1) from Xenopus laevis (African clawed frog).